The primary structure comprises 225 residues: Probable GTP-binding protein EngB (225 aa).

The 174-residue stretch at 31 to 204 folds into the EngB-type G domain; that stretch reads VGVEIAFAGR…LGILDSWCKP (174 aa). Residues 39-46, 65-69, 83-86, 150-153, and 183-185 each bind GTP; these read GRSNAGKS, GRTQL, DLPG, TKAD, and FSS. 2 residues coordinate Mg(2+): S46 and T67.

It belongs to the TRAFAC class TrmE-Era-EngA-EngB-Septin-like GTPase superfamily. EngB GTPase family. Mg(2+) serves as cofactor.

Functionally, necessary for normal cell division and for the maintenance of normal septation. The polypeptide is Probable GTP-binding protein EngB (Shewanella pealeana (strain ATCC 700345 / ANG-SQ1)).